The following is a 224-amino-acid chain: Deoxyribose-phosphate aldolase (224 aa).

Asp92 functions as the Proton donor/acceptor in the catalytic mechanism. Residue Lys155 is the Schiff-base intermediate with acetaldehyde of the active site. Lys184 (proton donor/acceptor) is an active-site residue.

Belongs to the DeoC/FbaB aldolase family. DeoC type 1 subfamily.

The protein resides in the cytoplasm. It catalyses the reaction 2-deoxy-D-ribose 5-phosphate = D-glyceraldehyde 3-phosphate + acetaldehyde. It participates in carbohydrate degradation; 2-deoxy-D-ribose 1-phosphate degradation; D-glyceraldehyde 3-phosphate and acetaldehyde from 2-deoxy-alpha-D-ribose 1-phosphate: step 2/2. Functionally, catalyzes a reversible aldol reaction between acetaldehyde and D-glyceraldehyde 3-phosphate to generate 2-deoxy-D-ribose 5-phosphate. This Clostridium perfringens (strain ATCC 13124 / DSM 756 / JCM 1290 / NCIMB 6125 / NCTC 8237 / Type A) protein is Deoxyribose-phosphate aldolase.